Reading from the N-terminus, the 348-residue chain is GTPase Obg (348 aa).

Residues 1-159 (MKFVDEVKVH…RELVLELKLM (159 aa)) enclose the Obg domain. The region spanning 160–331 (ADVGLVGLPN…LLSALVRILS (172 aa)) is the OBG-type G domain. Residues 166-173 (GLPNAGKS), 191-195 (FTTLI), 213-216 (DIPG), 283-286 (NKVD), and 312-314 (SAR) each bind GTP. The Mg(2+) site is built by Ser-173 and Thr-193.

Belongs to the TRAFAC class OBG-HflX-like GTPase superfamily. OBG GTPase family. Monomer. Requires Mg(2+) as cofactor.

It localises to the cytoplasm. In terms of biological role, an essential GTPase which binds GTP, GDP and possibly (p)ppGpp with moderate affinity, with high nucleotide exchange rates and a fairly low GTP hydrolysis rate. Plays a role in control of the cell cycle, stress response, ribosome biogenesis and in those bacteria that undergo differentiation, in morphogenesis control. The protein is GTPase Obg of Syntrophobacter fumaroxidans (strain DSM 10017 / MPOB).